The sequence spans 262 residues: Tropinone reductase homolog At2g29310 (262 aa).

13-37 (LVTGAASGIGYAIVEELASFGAIIH) is an NADP(+) binding site. Serine 146 is a substrate binding site. The Proton acceptor role is filled by tyrosine 159.

The protein belongs to the short-chain dehydrogenases/reductases (SDR) family. SDR65C subfamily.

The chain is Tropinone reductase homolog At2g29310 from Arabidopsis thaliana (Mouse-ear cress).